The sequence spans 76 residues: UPF0291 protein BA_1897/GBAA_1897/BAS1759 (76 aa).

The protein belongs to the UPF0291 family.

It localises to the cytoplasm. This chain is UPF0291 protein BA_1897/GBAA_1897/BAS1759, found in Bacillus anthracis.